Consider the following 334-residue polypeptide: MSGFYHKHFLKLLDFTPAELNSLLQLAAKLKADKKSGKEEAKLTGKNIALIFEKDSTRTRCSFEVAAYDQGARVTYLGPSGSQIGHKESIKDTARVLGRMYDGIQYRGYGQEIVETLAEYAGVPVWNGLTNEFHPTQLLADLLTMQEHLPGKTFNEMTLVYAGDARNNMGNSMLEAAALTGLDLRLVAPKACWPEAALVTECRALAQQNGGDITLTEDVAKGVEGADFIYTDVWVSMGEAKEKWAERIALLRDYQVNSKMMQLTGNPEVKFLHCLPAFHDDQTTLGKKMAEEFGLHGGMEVTDEVFESAASIVFDQAENRMHTIKAVMVATLSK.

Residues 56–59 (STRT), Q83, R107, and 134–137 (HPTQ) each bind carbamoyl phosphate. L-ornithine-binding positions include N168, D232, and 236 to 237 (SM). Residues 274–275 (CL) and R320 each bind carbamoyl phosphate.

The protein belongs to the aspartate/ornithine carbamoyltransferase superfamily. OTCase family.

The protein localises to the cytoplasm. It catalyses the reaction carbamoyl phosphate + L-ornithine = L-citrulline + phosphate + H(+). Its pathway is amino-acid biosynthesis; L-arginine biosynthesis; L-arginine from L-ornithine and carbamoyl phosphate: step 1/3. Reversibly catalyzes the transfer of the carbamoyl group from carbamoyl phosphate (CP) to the N(epsilon) atom of ornithine (ORN) to produce L-citrulline. This Escherichia coli O45:K1 (strain S88 / ExPEC) protein is Ornithine carbamoyltransferase.